The sequence spans 75 residues: Small ribosomal subunit protein eS17 (75 aa).

It belongs to the eukaryotic ribosomal protein eS17 family.

This chain is Small ribosomal subunit protein eS17, found in Thermoplasma acidophilum (strain ATCC 25905 / DSM 1728 / JCM 9062 / NBRC 15155 / AMRC-C165).